The primary structure comprises 166 residues: Putative lipoprotein Lxx21020 (166 aa).

An N-terminal signal peptide occupies residues 1 to 22 (MTKTTRLLRATTVAAILLGLTG). A lipid anchor (N-palmitoyl cysteine) is attached at C23. A lipid anchor (S-diacylglycerol cysteine) is attached at C23.

The protein resides in the cell membrane. This Leifsonia xyli subsp. xyli (strain CTCB07) protein is Putative lipoprotein Lxx21020.